We begin with the raw amino-acid sequence, 327 residues long: Zinc finger C2HC domain-containing protein 1A (327 aa).

The C2HC/C3H-type 1 zinc finger occupies glutamate 13–lysine 42. Residues cysteine 17, cysteine 20, histidine 32, and cysteine 36 each coordinate Zn(2+). 2 disordered regions span residues alanine 40 to glutamate 96 and asparagine 108 to glutamine 131. Positions valine 46–glycine 56 are enriched in basic and acidic residues. Residues lysine 63–serine 76 are compositionally biased toward low complexity. Positions proline 116–tyrosine 125 are enriched in pro residues. The C2HC/C3H-type 2 zinc finger occupies aspartate 128–arginine 157. Positions 132, 135, 147, and 151 each coordinate Zn(2+). The tract at residues glutamine 154 to lysine 271 is disordered. Residues asparagine 187 to proline 199 are compositionally biased toward polar residues. Positions glycine 211–glycine 229 are enriched in low complexity. Composition is skewed to polar residues over residues leucine 233 to serine 245 and valine 255 to isoleucine 267.

The protein belongs to the ZC2HC1 family. Zn(2+) is required as a cofactor.

The sequence is that of Zinc finger C2HC domain-containing protein 1A (zc2hc1a) from Danio rerio (Zebrafish).